We begin with the raw amino-acid sequence, 131 residues long: MSWQAYVDDHLMCDVGDGNTLASAAIIGHDGSVWAQSANFPQLKPEEVTGIMNDFNEGGFLAPTGLFLGGTKYMVIQGESGAVIGKKGSGGATLKKTGQAIVIGIYDEPMTPGQCNLVVERLGDYLLEQGM.

The protein belongs to the profilin family. As to quaternary structure, occurs in many kinds of cells as a complex with monomeric actin in a 1:1 ratio.

Its subcellular location is the cytoplasm. The protein resides in the cytoskeleton. Binds to actin and affects the structure of the cytoskeleton. At high concentrations, profilin prevents the polymerization of actin, whereas it enhances it at low concentrations. By binding to PIP2, it inhibits the formation of IP3 and DG. In Parietaria judaica (Pellitory-of-the-wall), this protein is Profilin-2 (PRO2).